The chain runs to 352 residues: C-C chemokine receptor type 5 (352 aa).

Topologically, residues 1–30 (MDYQVSSPTYDIDYYTSGPCQKINVKQIAA) are extracellular. The residue at position 3 (tyrosine 3) is a Sulfotyrosine. Serine 6 and serine 7 each carry an O-linked (GalNAc...) serine glycan. Tyrosine 10, tyrosine 14, and tyrosine 15 each carry sulfotyrosine. Disulfide bonds link cysteine 20/cysteine 269 and cysteine 101/cysteine 178. The helical transmembrane segment at 31-58 (RLLPPLYSLVFIFGFVGNMLVILILINC) threads the bilayer. The Cytoplasmic portion of the chain corresponds to 59–68 (KRLKSMTDIY). The helical transmembrane segment at 69-89 (LLNLAISDLFFLLTVPFWAHY) threads the bilayer. Residues 90-102 (AAAQWDFGNTMCQ) are Extracellular-facing. The helical transmembrane segment at 103–124 (LLTGLYFIGFFSGIFFIILLTI) threads the bilayer. Topologically, residues 125-141 (DRYLAIVHAVFALKART) are cytoplasmic. A helical transmembrane segment spans residues 142 to 166 (VTFGVVTSVITWVVAVFASLPGIIF). Over 167–198 (TRSQKEGLHYTCSSHFPYSQYQFWKNFQTLKI) the chain is Extracellular. Residues 199–218 (VILGLVLPLLVMVICYSGIL) form a helical membrane-spanning segment. Topologically, residues 219 to 235 (KTLLRCRNEKKRHRAVR) are cytoplasmic. A helical transmembrane segment spans residues 236-260 (LIFTIMIVYFLFWAPYNIVLLLNTF). Residues 261-277 (QEFFGLNNCSSSNRLDQ) are Extracellular-facing. A helical transmembrane segment spans residues 278-301 (AMQVTETLGMTHCCINPIIYAFVG). Topologically, residues 302 to 352 (EKFRNYLLVFFQKHIAKHFCKCCSIFQQEAPERASSVYTRSTGEQEISVGL) are cytoplasmic. S-palmitoyl cysteine attachment occurs at residues cysteine 321, cysteine 323, and cysteine 324. Phosphoserine; by BARK1 is present on residues serine 336, serine 337, serine 342, and serine 349.

This sequence belongs to the G-protein coupled receptor 1 family. Interacts with PRAF2. Efficient ligand binding to CCL3/MIP-1alpha and CCL4/MIP-1beta requires sulfation, O-glycosylation and sialic acid modifications. Glycosylation on Ser-6 is required for efficient binding of CCL4. Interacts with GRK2. Interacts with ARRB1 and ARRB2. Interacts with CNIH4. Interacts with S100A4; this interaction stimulates T-lymphocyte chemotaxis. In terms of processing, sulfated on at least 2 of the N-terminal tyrosines. Sulfation is required for efficient binding of the chemokines, CCL3 and CCL4. Palmitoylation in the C-terminal is important for cell surface expression. Post-translationally, phosphorylation on serine residues in the C-terminal is stimulated by binding CC chemokines especially by APO-RANTES. In terms of processing, O-glycosylated, but not N-glycosylated. Ser-6 appears to be the major site even if Ser-7 may be also O-glycosylated. Also sialylated glycans present which contribute to chemokine binding. Thr-16 and Ser-17 may also be glycosylated and, if so, with small moieties such as a T-antigen.

Its subcellular location is the cell membrane. Functionally, receptor for a number of inflammatory CC-chemokines including CCL3/MIP-1-alpha, CCL4/MIP-1-beta and RANTES and subsequently transduces a signal by increasing the intracellular calcium ion level. May play a role in the control of granulocytic lineage proliferation or differentiation. Participates in T-lymphocyte migration to the infection site by acting as a chemotactic receptor. The sequence is that of C-C chemokine receptor type 5 (CCR5) from Hylobates moloch (Silvery gibbon).